The primary structure comprises 311 residues: tRNA-cytidine(32) 2-sulfurtransferase (311 aa).

The PP-loop motif signature appears at 47–52 (SGGKDS). Cys122, Cys125, and Cys213 together coordinate [4Fe-4S] cluster.

The protein belongs to the TtcA family. As to quaternary structure, homodimer. Mg(2+) serves as cofactor. It depends on [4Fe-4S] cluster as a cofactor.

Its subcellular location is the cytoplasm. It carries out the reaction cytidine(32) in tRNA + S-sulfanyl-L-cysteinyl-[cysteine desulfurase] + AH2 + ATP = 2-thiocytidine(32) in tRNA + L-cysteinyl-[cysteine desulfurase] + A + AMP + diphosphate + H(+). It participates in tRNA modification. Catalyzes the ATP-dependent 2-thiolation of cytidine in position 32 of tRNA, to form 2-thiocytidine (s(2)C32). The sulfur atoms are provided by the cysteine/cysteine desulfurase (IscS) system. The sequence is that of tRNA-cytidine(32) 2-sulfurtransferase from Klebsiella pneumoniae (strain 342).